A 294-amino-acid polypeptide reads, in one-letter code: 3-methyl-2-oxobutanoate hydroxymethyltransferase 1 (294 aa).

A Mg(2+)-binding site is contributed by aspartate 55. 3-methyl-2-oxobutanoate contacts are provided by residues 55–56 (DS) and lysine 123. Residue glutamate 192 is the Proton acceptor of the active site.

This sequence belongs to the PanB family. Homodecamer; pentamer of dimers. Mg(2+) serves as cofactor.

Its subcellular location is the cytoplasm. The enzyme catalyses 3-methyl-2-oxobutanoate + (6R)-5,10-methylene-5,6,7,8-tetrahydrofolate + H2O = 2-dehydropantoate + (6S)-5,6,7,8-tetrahydrofolate. It functions in the pathway cofactor biosynthesis; (R)-pantothenate biosynthesis; (R)-pantoate from 3-methyl-2-oxobutanoate: step 1/2. Catalyzes the reversible reaction in which hydroxymethyl group from 5,10-methylenetetrahydrofolate is transferred onto alpha-ketoisovalerate to form ketopantoate. The polypeptide is 3-methyl-2-oxobutanoate hydroxymethyltransferase 1 (Methylibium petroleiphilum (strain ATCC BAA-1232 / LMG 22953 / PM1)).